Consider the following 529-residue polypeptide: Beta-hexosaminidase subunit alpha (529 aa).

Positions 1–22 (MTSSRLWFSLLLAAAFAGRATA) are cleaved as a signal peptide. Positions 23 to 88 (LWPWPQNFQT…PRPYLTGKRH (66 aa)) are excised as a propeptide. Cys-58 and Cys-104 are joined by a disulfide. Residues Asn-115, Asn-157, and Asn-295 are each glycosylated (N-linked (GlcNAc...) asparagine). An intrachain disulfide couples Cys-277 to Cys-328. Residue Glu-323 is the Proton donor of the active site. Positions 423 to 424 (NR) are critical for hydrolysis GM2 gangliosides. Cysteines 505 and 522 form a disulfide.

The protein belongs to the glycosyl hydrolase 20 family. As to quaternary structure, there are 3 beta-hexosaminidase isozymes: isozyme A (hexosaminidase A) is a heterodimer composed of one subunit alpha and one subunit beta (chain A and B); isozyme B (hexosaminidase B) is a homodimer of two beta subunits (two chains A and B); isozyme S (hexosaminidase S) is a homodimer of two alpha subunits. The composition of the dimer (isozyme A versus isozyme S) has a significant effect on the substrate specificity of the alpha subunit active site. In terms of processing, N-linked glycan at Asn-115 consists of Man(3)-GlcNAc(2). N-linked glycan at Asn-157 consists of either GlcNAc or GlcNAc(2)-Man(7-9). N-linked glycan at Asn-295 consists of either GlcNAc, GlcNAc-Fuc, or GlcNAc(2)-Man(4).

The protein resides in the lysosome. It carries out the reaction Hydrolysis of terminal non-reducing N-acetyl-D-hexosamine residues in N-acetyl-beta-D-hexosaminides.. The catalysed reaction is N-acetyl-beta-D-galactosaminyl-(1-&gt;4)-beta-D-3-sulfogalactosyl-(1-&gt;4)-beta-D-glucosyl-(1&lt;-&gt;1')-ceramide + H2O = a beta-D-3-sulfogalactosyl-(1-&gt;4)-beta-D-glucosyl-(1&lt;-&gt;1')-ceramide + N-acetyl-beta-D-galactosamine. The enzyme catalyses a ganglioside GM2 (d18:1(4E)) + H2O = a ganglioside GM3 (d18:1(4E)) + N-acetyl-beta-D-galactosamine. It catalyses the reaction a ganglioside GM2 + H2O = a ganglioside GM3 + N-acetyl-beta-D-galactosamine. It carries out the reaction beta-D-GalNAc-(1-&gt;4)-alpha-L-IdoA-(1-&gt;3)-beta-D-GalNAc-4-sulfate-(1-&gt;4)-alpha-L-IdoA-(1-&gt;3)-D-GalNAc-4-sulfate + H2O = alpha-L-IdoA-(1-&gt;3)-beta-D-GalNAc-4-sulfate-(1-&gt;4)-alpha-L-IdoA-(1-&gt;3)-D-GalNAc-4-sulfate + N-acetyl-D-galactosamine. The catalysed reaction is N-acetyl-beta-D-6-sulfogalactosaminyl-(1-&gt;4)-alpha-L-iduronyl-(1-&gt;3)-N-acetyl-D-6-sulfogalactosamine + H2O = alpha-L-iduronyl-(1-&gt;3)-N-acetyl-D-6-sulfogalactosamine + N-acetyl-D-6-sulfogalactosamine. Addition of GM2A stimulates the hydrolysis of sulfated glycosphingolipid SM2 and the ganglioside GM2. Functionally, hydrolyzes the non-reducing end N-acetyl-D-hexosamine and/or sulfated N-acetyl-D-hexosamine of glycoconjugates, such as the oligosaccharide moieties from proteins and neutral glycolipids, or from certain mucopolysaccharides. The isozyme S is as active as the isozyme A on the anionic bis-sulfated glycans, the chondroitin-6-sulfate trisaccharide (C6S-3), and the dermatan sulfate pentasaccharide, and the sulfated glycosphingolipid SM2. The isozyme B does not hydrolyze each of these substrates, however hydrolyzes efficiently neutral oligosaccharide. Only the isozyme A is responsible for the degradation of GM2 gangliosides in the presence of GM2A. The sequence is that of Beta-hexosaminidase subunit alpha from Homo sapiens (Human).